We begin with the raw amino-acid sequence, 144 residues long: Large ribosomal subunit protein uL16 (144 aa).

Over residues 1-16 (MLIPKRVKYRKQHRPR) the composition is skewed to basic residues. The tract at residues 1–25 (MLIPKRVKYRKQHRPRGNGGVSKGG) is disordered.

The protein belongs to the universal ribosomal protein uL16 family. Part of the 50S ribosomal subunit.

Its function is as follows. Binds 23S rRNA and is also seen to make contacts with the A and possibly P site tRNAs. The polypeptide is Large ribosomal subunit protein uL16 (Desulforamulus reducens (strain ATCC BAA-1160 / DSM 100696 / MI-1) (Desulfotomaculum reducens)).